The following is a 123-amino-acid chain: Large ribosomal subunit protein uL18 (123 aa).

Belongs to the universal ribosomal protein uL18 family. Part of the 50S ribosomal subunit; part of the 5S rRNA/L5/L18/L25 subcomplex. Contacts the 5S and 23S rRNAs.

Functionally, this is one of the proteins that bind and probably mediate the attachment of the 5S RNA into the large ribosomal subunit, where it forms part of the central protuberance. In Chlamydia caviae (strain ATCC VR-813 / DSM 19441 / 03DC25 / GPIC) (Chlamydophila caviae), this protein is Large ribosomal subunit protein uL18.